We begin with the raw amino-acid sequence, 402 residues long: MRILYLDPFSGISGDMFLGLLVDLGVDPEKIKSRLEKLNVEFEFVVKKENKKGVTATKVDVVFPGKEHHEDHIVSDHDHHHHHGRHLSEIVEVLSRLEDPLKEKAIRMFETLAEAESKIHGLSKEKVHFHEVGAMDAVIEIAGAVAGLELLGVEKVFCGTVNTGSGFVMTEHGRYPVPAPATAELLKGIPIYVDQKVRTELVTPTGAVILKSLVDEFRTPILRVEKVGYGAGTMDLEIPNVLRGYLGYIEPSERTGDVLIETNVDDMSPQLFGHLMERLFEAGAKDVFFTPIYMKKNRPAVKVSVLCHESKKDEILKLLFKESTSIGARVFYPEKVEATRTVKTVKTEYGEIPVKIASFDSEIVNISPEYEACKKIAQEKGIPLKEVYRAVCKSVSEVRDDV.

The protein belongs to the LarC family.

It catalyses the reaction Ni(II)-pyridinium-3,5-bisthiocarboxylate mononucleotide = pyridinium-3,5-bisthiocarboxylate mononucleotide + Ni(2+). Functionally, involved in the biosynthesis of a nickel-pincer cofactor ((SCS)Ni(II) pincer complex). Binds Ni(2+), and functions in nickel delivery to pyridinium-3,5-bisthiocarboxylic acid mononucleotide (P2TMN), to form the mature cofactor. Is thus probably required for the activation of nickel-pincer cofactor-dependent enzymes. This chain is Pyridinium-3,5-bisthiocarboxylic acid mononucleotide nickel insertion protein, found in Thermotoga sp. (strain RQ2).